Consider the following 190-residue polypeptide: dCTP deaminase, dUMP-forming (190 aa).

DCTP contacts are provided by residues 101–106, Asp-119, 127–129, Gln-148, Tyr-162, and Gln-174; these read KSSLGR and TLE. Glu-129 (proton donor/acceptor) is an active-site residue. Positions 163–190 are disordered; it reads GSSQVGSKYQGQRGPTPSKSYQNFVKSN.

Belongs to the dCTP deaminase family. In terms of assembly, homotrimer.

The catalysed reaction is dCTP + 2 H2O = dUMP + NH4(+) + diphosphate. The protein operates within pyrimidine metabolism; dUMP biosynthesis; dUMP from dCTP: step 1/1. Its function is as follows. Bifunctional enzyme that catalyzes both the deamination of dCTP to dUTP and the hydrolysis of dUTP to dUMP without releasing the toxic dUTP intermediate. The sequence is that of dCTP deaminase, dUMP-forming from Mycolicibacterium gilvum (strain PYR-GCK) (Mycobacterium gilvum (strain PYR-GCK)).